Consider the following 1388-residue polypeptide: ESX-5 secretion system protein EccC5 (1388 aa).

2 helical membrane-spanning segments follow: residues 38–58 and 65–85; these read WLIV…AMVF and FGGV…MMMF. FtsK domains follow at residues 477-679, 855-1049, and 1158-1351; these read GELL…GAAQ, QPPW…EDAK, and LQPV…DPDE. ATP is bound by residues 500–507, 873–880, and 1175–1182; these read GTTGSGKS, GAGGSGKT, and GRRECGRT.

In terms of assembly, part of the ESX-5 / type VII secretion system (T7SS), which is composed of cytosolic and membrane components. The ESX-5 membrane complex is composed of EccB5, EccC5, EccD5 and EccE5.

Its subcellular location is the cell inner membrane. Its function is as follows. Part of the ESX-5 specialized secretion system, which is responsible for the secretion of EsxN and a number of PE_PGRS and PPE proteins. This component is essential for ESX-5 complex stability and secretion. This Mycobacterium marinum (strain ATCC BAA-535 / M) protein is ESX-5 secretion system protein EccC5.